Consider the following 223-residue polypeptide: Transcriptional regulatory protein HprR (223 aa).

The region spanning 2-115 (KILLIEDNQR…ELLARVRAQL (114 aa)) is the Response regulatory domain. Aspartate 51 bears the 4-aspartylphosphate mark. Positions 122–220 (NSTLEISGLR…IRGMGYSFVA (99 aa)) form a DNA-binding region, ompR/PhoB-type.

Phosphorylated by HprS.

It is found in the cytoplasm. In terms of biological role, member of a two-component regulatory system HprR/HprS involved in response to hydrogen peroxide. Regulates the expression of at least 5 operons, cyoABCDE, hprRS, hiuH, cusRS and cusCFBA. Bifunctional regulator that acts as an activator and a repressor. The chain is Transcriptional regulatory protein HprR from Escherichia coli (strain K12).